The primary structure comprises 283 residues: Coiled-coil domain-containing protein 107 (283 aa).

The N-terminal stretch at 1 to 24 (MAGAVSLLGVVGLLLVSALSGVLG) is a signal peptide. Residues 30–62 (DLRAHPGNAAHPGSGATEPRRRPPLKDQRERTR) are disordered. The span at 47–62 (EPRRRPPLKDQRERTR) shows a compositional bias: basic and acidic residues. The helical transmembrane segment at 65–85 (SLPLGALYTAAVAAFVLYKCL) threads the bilayer. Residues 104–134 (LQSEQQLAQLTQQLAQTEQHLNNLMAQLDPL) adopt a coiled-coil conformation. Disordered regions lie at residues 164–207 (KPDK…SRPL) and 258–283 (AKGPSHSLGWEGGTTAEGRLKQSLFS). A compositionally biased stretch (gly residues) spans 176–187 (EGSGGESAGGGD).

The protein resides in the membrane. The protein is Coiled-coil domain-containing protein 107 (CCDC107) of Homo sapiens (Human).